The following is a 276-amino-acid chain: MDYRACTSALRMPVLLLLLCTFSCNLAEQEVENLSGLSSNPDKNIFAIRENGTTCLMAEFSARILVPYEVPSSNEVDWDLEEASIQLPRDTEIRGKCWNNESELHLSWLDKAYTLKLFFSKEGQDASKSRSWKMSKIQFLYDPSEHTIFKSGARPGRHTANSHHLSLMVTPAGMSYECEATQRISLTSTDHQKIVVLYLSEVHLQPFDIKSDFVYSEEYKCPTDQRKQLEETLPLILGLTLGVAILIIVAVYHIHHKMTANQVQIPRDRSLYKHMG.

The signal sequence occupies residues 1-27 (MDYRACTSALRMPVLLLLLCTFSCNLA). The Extracellular segment spans residues 28-231 (EQEVENLSGL…PTDQRKQLEE (204 aa)). Residues N33, N51, and N100 are each glycosylated (N-linked (GlcNAc...) asparagine). The helical transmembrane segment at 232–252 (TLPLILGLTLGVAILIIVAVY) threads the bilayer. Residues 253–276 (HIHHKMTANQVQIPRDRSLYKHMG) are Cytoplasmic-facing.

This sequence belongs to the LAMP family. Post-translationally, glycosylated.

The protein localises to the cytoplasmic vesicle membrane. The protein resides in the cell membrane. Its subcellular location is the cell projection. It is found in the dendrite. It localises to the cytoplasmic vesicle. The protein localises to the secretory vesicle. The protein resides in the synaptic vesicle membrane. Its subcellular location is the growth cone membrane. It is found in the early endosome membrane. It localises to the recycling endosome. The protein localises to the endoplasmic reticulum-Golgi intermediate compartment membrane. The protein resides in the endosome membrane. Plays a role in short-term synaptic plasticity in a subset of GABAergic neurons in the brain. This chain is Lysosome-associated membrane glycoprotein 5 (lamp5), found in Xenopus tropicalis (Western clawed frog).